A 134-amino-acid polypeptide reads, in one-letter code: Replication enhancer protein (134 aa).

This sequence belongs to the geminiviridae replication enhancer protein family. As to quaternary structure, homooligomer. Interacts with the replication-associated protein (REP). Interacts with host proliferating cell nuclear antigen (PCNA). Interacts with host retinoblastoma-related protein 1 (RBR1), and may thereby deregulate the host cell cycle. Oligomerization and interaction with PCNA are necessary for optimal replication enhancement.

In terms of biological role, increases viral DNA accumulation. Enhances infectivity and symptom expression. This is Replication enhancer protein from Tomato pseudo-curly top virus (TPCTV).